The following is a 183-amino-acid chain: uncharacterized protein (183 aa).

Residues 1–182 (MFRVVHGDIT…VALKVLERDE (182 aa)) enclose the Macro domain.

This is an uncharacterized protein from Pyrococcus abyssi (strain GE5 / Orsay).